A 464-amino-acid chain; its full sequence is ATP synthase subunit beta (464 aa).

Position 148–155 (148–155 (GGAGVGKT)) interacts with ATP.

This sequence belongs to the ATPase alpha/beta chains family. As to quaternary structure, F-type ATPases have 2 components, CF(1) - the catalytic core - and CF(0) - the membrane proton channel. CF(1) has five subunits: alpha(3), beta(3), gamma(1), delta(1), epsilon(1). CF(0) has three main subunits: a(1), b(2) and c(9-12). The alpha and beta chains form an alternating ring which encloses part of the gamma chain. CF(1) is attached to CF(0) by a central stalk formed by the gamma and epsilon chains, while a peripheral stalk is formed by the delta and b chains.

The protein resides in the cell inner membrane. It carries out the reaction ATP + H2O + 4 H(+)(in) = ADP + phosphate + 5 H(+)(out). In terms of biological role, produces ATP from ADP in the presence of a proton gradient across the membrane. The catalytic sites are hosted primarily by the beta subunits. The protein is ATP synthase subunit beta of Acinetobacter baumannii (strain AB0057).